Consider the following 473-residue polypeptide: ATP synthase subunit beta (473 aa).

Position 158–165 (G158–T165) interacts with ATP.

This sequence belongs to the ATPase alpha/beta chains family. As to quaternary structure, F-type ATPases have 2 components, CF(1) - the catalytic core - and CF(0) - the membrane proton channel. CF(1) has five subunits: alpha(3), beta(3), gamma(1), delta(1), epsilon(1). CF(0) has three main subunits: a(1), b(2) and c(9-12). The alpha and beta chains form an alternating ring which encloses part of the gamma chain. CF(1) is attached to CF(0) by a central stalk formed by the gamma and epsilon chains, while a peripheral stalk is formed by the delta and b chains.

It is found in the cell membrane. The catalysed reaction is ATP + H2O + 4 H(+)(in) = ADP + phosphate + 5 H(+)(out). Produces ATP from ADP in the presence of a proton gradient across the membrane. The catalytic sites are hosted primarily by the beta subunits. This chain is ATP synthase subunit beta, found in Carboxydothermus hydrogenoformans (strain ATCC BAA-161 / DSM 6008 / Z-2901).